Here is a 536-residue protein sequence, read N- to C-terminus: Probable protein S-acyltransferase 23 (536 aa).

Residues 1 to 23 (MDSSEIEVVPLDSNSHQSPTESP) form a disordered region. Residues 12–23 (DSNSHQSPTESP) are compositionally biased toward polar residues. ANK repeat units follow at residues 57 to 86 (NGFYALQWAALNNSLHVAQYIIQHGGDVNS), 90 to 119 (IQQTPLHWAAVKGSIDVADLLLQHGARIEA), 123 to 153 (NGFRAVHVASQYGQTAFVNHIIVDYAADYNA), 157 to 186 (EGRSPLHWAAYNGFTETVRLLLFRDACQNR), 190 to 219 (TGCTPLHWAVIKENVEACTLLVHAGTKEEL), and 225 to 254 (TGSTPLKLASDKGHRQLALFLSKAMRTRKN). Helical transmembrane passes span 270-290 (YAPMLFSLIVILMVLFITSIV) and 298-318 (ITAMVGLWACFGLSCGVYALI). One can recognise a DHHC domain in the interval 363–413 (QLCPTCKIIRPVRSKHCPTCKRCVEQFDHHCPWISNCVGKKNKRYFLVFVI). Catalysis depends on C393, which acts as the S-palmitoyl cysteine intermediate. 2 helical membrane passes run 407–427 (YFLVFVIMGALTSFVGGTTAV) and 454–474 (AAVFLFFDLLIFIATMTLTIS).

It belongs to the DHHC palmitoyltransferase family. Expressed in roots, shoots, flowers and pollen.

Its subcellular location is the golgi apparatus membrane. It carries out the reaction L-cysteinyl-[protein] + hexadecanoyl-CoA = S-hexadecanoyl-L-cysteinyl-[protein] + CoA. In terms of biological role, palmitoyl acyltransferase. The protein is Probable protein S-acyltransferase 23 (PAT23) of Arabidopsis thaliana (Mouse-ear cress).